Reading from the N-terminus, the 329-residue chain is T-cell acute lymphocytic leukemia protein 1 homolog (329 aa).

Disordered stretches follow at residues 1–28 (MTER…RMAP), 40–78 (ETSR…KGRD), and 91–125 (TELC…SPPA). At Ser-12 the chain carries Phosphoserine. Gly residues predominate over residues 58-70 (SGAGGGPASGGGA). Residues 96–106 (PPGPAPAPAPA) are compositionally biased toward pro residues. Ser-122 bears the Phosphoserine; by MAPK mark. Ser-172 carries the post-translational modification Phosphoserine. Positions 187–239 (VRRIFTNSRERWRQQNVNGAFAELRKLIPTHPPDKKLSKNEILRLAMKYINFL) constitute a bHLH domain. The tract at residues 247–329 (EEEGTQRAKP…LPAADGAGPR (83 aa)) is disordered. Positions 263-273 (GAGGGGAGGGI) are enriched in gly residues. The span at 317–329 (PALLPAADGAGPR) shows a compositional bias: low complexity.

In terms of assembly, efficient DNA binding requires dimerization with another bHLH protein. Forms heterodimers with TCF3. Binds to the LIM domain containing protein LMO2 and to DRG1. Can assemble in a complex with LDB1 and LMO2. Component of a TAL-1 complex composed at least of CBFA2T3, LDB1, TAL1 and TCF3. Interacts with SBNO2; this interaction inhibits TAL1 occupancy of the DCSTAMP promoter, leading to the activation of the DCSTAMP promoter by the transcription factor MITF. In terms of processing, phosphorylated on serine residues. Phosphorylation of Ser-122 by MAPK is strongly stimulated by hypoxia. Ubiquitinated; subsequent to hypoxia-dependent phosphorylation of Ser-122, ubiquitination targets the protein for rapid degradation via the ubiquitin system. This process may be characteristic for microvascular endothelial cells, since it could not be observed in large vessel endothelial cells. As to expression, erythroid and myeloid cells.

It is found in the nucleus. Functionally, implicated in the genesis of hemopoietic malignancies. It may play an important role in hemopoietic differentiation. Serves as a positive regulator of erythroid differentiation. The chain is T-cell acute lymphocytic leukemia protein 1 homolog (Tal1) from Mus musculus (Mouse).